A 584-amino-acid polypeptide reads, in one-letter code: Inactive metallocarboxypeptidase ECM14 (584 aa).

The signal sequence occupies residues 1–20; that stretch reads MHLLPVITAVALIYTPLASA. A propeptide spanning residues 21 to 174 is cleaved from the precursor; that stretch reads VPSSSNPQFP…QAVYESYPQP (154 aa). Residues 202–524 form the Peptidase M14 domain; the sequence is DYQPLSVMTP…NAVLEFGKFL (323 aa). Positions 267 and 270 each coordinate Zn(2+). Residues 267-270, R325, and 342-343 contribute to the substrate site; these read HARE and DR. C336 and C359 are oxidised to a cystine. Residues N383 and N389 are each glycosylated (N-linked (GlcNAc...) asparagine). H399 serves as a coordination point for Zn(2+). Position 400 to 401 (400 to 401) interacts with substrate; sequence SY. The interval 564–584 is disordered; that stretch reads QQLDDEDGEADSHWVLRTQRS.

This sequence belongs to the peptidase M14 family. Requires Zn(2+) as cofactor.

The protein resides in the vacuole. It localises to the secreted. Its function is as follows. Inactive carboxypeptidase that may play a role in cell wall organization and biogenesis. This Uncinocarpus reesii (strain UAMH 1704) protein is Inactive metallocarboxypeptidase ECM14 (ECM14).